A 309-amino-acid polypeptide reads, in one-letter code: Taste receptor type 2 member 20 (309 aa).

At 1–6 the chain is on the extracellular side; sequence MMSFLH. The helical transmembrane segment at 7–27 threads the bilayer; sequence IVFSILVVVAFILGNFANGFI. Residues 28 to 46 are Cytoplasmic-facing; it reads ALINFIAWVKRQKISSADQ. The chain crosses the membrane as a helical span at residues 47 to 67; it reads IIAALAVSRVGLLWVILLHWY. Residues 68-79 are Extracellular-facing; that stretch reads STVLNPTSSNLK. A helical membrane pass occupies residues 80–100; the sequence is VIIFISNAWAVTNHFSIWLAT. Topologically, residues 101–125 are cytoplasmic; sequence SLSIFYLLKIVNFSRLIFHHLKRKA. A helical membrane pass occupies residues 126–146; that stretch reads KSVVLVIVLGSLFFLVCHLVM. Residues 147–178 lie on the Extracellular side of the membrane; it reads KHTYINVWTEECEGNVTWKIKLRNAMHLSNLT. 2 N-linked (GlcNAc...) asparagine glycosylation sites follow: asparagine 161 and asparagine 176. The chain crosses the membrane as a helical span at residues 179-199; it reads VAMLANLIPFTLTLISFLLLI. Residues 200–229 are Cytoplasmic-facing; that stretch reads YSLCKHLKKMQLHGKGSQDPSTKIHIKALQ. A helical transmembrane segment spans residues 230–250; the sequence is TVTSFLILLAIYFLCLIISFW. Residues 251 to 259 are Extracellular-facing; that stretch reads NFKMRPKEI. Residues 260-280 form a helical membrane-spanning segment; sequence VLMLCQAFGIIYPSFHSFILI. Topologically, residues 281–309 are cytoplasmic; the sequence is WGNKTLKQTFLSVLWQVTCWAKGQNQSTP.

It belongs to the G-protein coupled receptor T2R family. In terms of tissue distribution, expressed in subsets of taste receptor cells of the tongue and exclusively in gustducin-positive cells.

It is found in the membrane. In terms of biological role, receptor that may play a role in the perception of bitterness and is gustducin-linked. May play a role in sensing the chemical composition of the gastrointestinal content. The activity of this receptor may stimulate alpha gustducin, mediate PLC-beta-2 activation and lead to the gating of TRPM5. The sequence is that of Taste receptor type 2 member 20 (TAS2R20) from Homo sapiens (Human).